Reading from the N-terminus, the 523-residue chain is Sporulation protein 23 (523 aa).

In terms of assembly, interacts with SPO1 in meiosis.

Its function is as follows. Regulates expression of PIS1. The sequence is that of Sporulation protein 23 (SPO23) from Saccharomyces cerevisiae (strain ATCC 204508 / S288c) (Baker's yeast).